Consider the following 370-residue polypeptide: MMKTVHVALGARSYDVEIGPGLIAEAGARIAPLLARKRVAVLTDETVAALHLEALREGLAAGGVTMEALALPPGESTKGWPQFERAADWLLDQKVERRDVVVAFGGGVIGDLAGFAAAVLRRGVRFVQIPTSLLAQVDSSVGGKTGINASHGKNLIGAFHQPSLVLADTAVLGTLTARDFLAGYGEVVKYGLLGDAAFFDWLEGQGPALAAGDMAARVEAVTRSVQMKADIVARDETEQGDRALLNLGHTFCHALEAATGYSDRLLHGEGVAIGCALAFELSARLGLCSQEDPSRVRAHLKAMGMKTDLTDIPGDLPTADVLVDLMAQDKKVVDGQLRFILARGIGQAFVTSDVPREAVLTVLEDALASC.

NAD(+) is bound by residues 107 to 111, 131 to 132, Lys-144, and Lys-153; these read GVIGD and TS. Glu-186, His-249, and His-267 together coordinate Zn(2+).

This sequence belongs to the sugar phosphate cyclases superfamily. Dehydroquinate synthase family. The cofactor is Co(2+). Zn(2+) is required as a cofactor. NAD(+) serves as cofactor.

It is found in the cytoplasm. The enzyme catalyses 7-phospho-2-dehydro-3-deoxy-D-arabino-heptonate = 3-dehydroquinate + phosphate. It functions in the pathway metabolic intermediate biosynthesis; chorismate biosynthesis; chorismate from D-erythrose 4-phosphate and phosphoenolpyruvate: step 2/7. In terms of biological role, catalyzes the conversion of 3-deoxy-D-arabino-heptulosonate 7-phosphate (DAHP) to dehydroquinate (DHQ). The protein is 3-dehydroquinate synthase of Ruegeria pomeroyi (strain ATCC 700808 / DSM 15171 / DSS-3) (Silicibacter pomeroyi).